Here is a 459-residue protein sequence, read N- to C-terminus: Bifunctional protein GlmU (459 aa).

The pyrophosphorylase stretch occupies residues 1-230; it reads MSNRFAVILA…FDETLGVNDR (230 aa). UDP-N-acetyl-alpha-D-glucosamine-binding positions include 9–12, Lys23, Gln73, and 78–79; these read LAAG and GT. Residue Asp103 participates in Mg(2+) binding. Positions 140, 155, 170, and 228 each coordinate UDP-N-acetyl-alpha-D-glucosamine. Asn228 contacts Mg(2+). Residues 231–251 are linker; the sequence is VALSQAEIIMKNRINRKNMVN. Positions 252-459 are N-acetyltransferase; the sequence is GVTIIDPSNT…VDQLLNKKKS (208 aa). Residues Arg333 and Lys351 each contribute to the UDP-N-acetyl-alpha-D-glucosamine site. His363 serves as the catalytic Proton acceptor. Residues Tyr366 and Asn377 each coordinate UDP-N-acetyl-alpha-D-glucosamine. Residues 386–387, Ala423, and Arg440 contribute to the acetyl-CoA site; that span reads NY.

In the N-terminal section; belongs to the N-acetylglucosamine-1-phosphate uridyltransferase family. The protein in the C-terminal section; belongs to the transferase hexapeptide repeat family. Homotrimer. The cofactor is Mg(2+).

It is found in the cytoplasm. It catalyses the reaction alpha-D-glucosamine 1-phosphate + acetyl-CoA = N-acetyl-alpha-D-glucosamine 1-phosphate + CoA + H(+). The catalysed reaction is N-acetyl-alpha-D-glucosamine 1-phosphate + UTP + H(+) = UDP-N-acetyl-alpha-D-glucosamine + diphosphate. The protein operates within nucleotide-sugar biosynthesis; UDP-N-acetyl-alpha-D-glucosamine biosynthesis; N-acetyl-alpha-D-glucosamine 1-phosphate from alpha-D-glucosamine 6-phosphate (route II): step 2/2. It functions in the pathway nucleotide-sugar biosynthesis; UDP-N-acetyl-alpha-D-glucosamine biosynthesis; UDP-N-acetyl-alpha-D-glucosamine from N-acetyl-alpha-D-glucosamine 1-phosphate: step 1/1. Its pathway is bacterial outer membrane biogenesis; LPS lipid A biosynthesis. Functionally, catalyzes the last two sequential reactions in the de novo biosynthetic pathway for UDP-N-acetylglucosamine (UDP-GlcNAc). The C-terminal domain catalyzes the transfer of acetyl group from acetyl coenzyme A to glucosamine-1-phosphate (GlcN-1-P) to produce N-acetylglucosamine-1-phosphate (GlcNAc-1-P), which is converted into UDP-GlcNAc by the transfer of uridine 5-monophosphate (from uridine 5-triphosphate), a reaction catalyzed by the N-terminal domain. The protein is Bifunctional protein GlmU of Bacillus anthracis (strain A0248).